The sequence spans 276 residues: Cytoskeleton protein RodZ (276 aa).

Residues 1 to 110 lie on the Cytoplasmic side of the membrane; that stretch reads MTSMRKKTIG…SSKKKKKKTS (110 aa). Residues 111–131 traverse the membrane as a helical; Signal-anchor for type II membrane protein segment; it reads FLPLFYFILFALSILIFVTYY. Residues 132–276 are Extracellular-facing; it reads VWNYIQTQPE…GQITVTFTKN (145 aa).

The protein belongs to the RodZ family. In terms of assembly, interacts with MltG and MreC in the elongasome. Interacts with KhpB (also called EloR/Jag).

Its subcellular location is the cell membrane. Functionally, cytoskeletal protein that is involved in cell-shape control through regulation of the length of the long axis. Probably part of the elongasome which synthesizes peripheral peptidoglycan. This is Cytoskeleton protein RodZ from Streptococcus pneumoniae (strain ATCC BAA-255 / R6).